The primary structure comprises 146 residues: Large ribosomal subunit protein uL15 (146 aa).

Residues 1–51 (MKLHELQPAPGSRKERNRVGRGIGSGNGKTSGKGHKGQNARSGGGVRIGFE) are disordered. Gly residues-rich tracts occupy residues 21-31 (RGIGSGNGKTS) and 42-51 (SGGGVRIGFE).

This sequence belongs to the universal ribosomal protein uL15 family. In terms of assembly, part of the 50S ribosomal subunit.

Functionally, binds to the 23S rRNA. This chain is Large ribosomal subunit protein uL15, found in Anoxybacillus flavithermus (strain DSM 21510 / WK1).